The sequence spans 228 residues: Lipoprotein-releasing system ATP-binding protein LolD (228 aa).

In terms of domain architecture, ABC transporter spans 5-228 (FALSAISKSF…SGTLQNYTDY (224 aa)). Residue 40 to 47 (GPSGSGKS) coordinates ATP.

The protein belongs to the ABC transporter superfamily. Lipoprotein translocase (TC 3.A.1.125) family. As to quaternary structure, the complex is composed of two ATP-binding proteins (LolD) and two transmembrane proteins (LolC and LolE).

The protein localises to the cell inner membrane. Functionally, part of the ABC transporter complex LolCDE involved in the translocation of mature outer membrane-directed lipoproteins, from the inner membrane to the periplasmic chaperone, LolA. Responsible for the formation of the LolA-lipoprotein complex in an ATP-dependent manner. The sequence is that of Lipoprotein-releasing system ATP-binding protein LolD from Ehrlichia ruminantium (strain Gardel).